Consider the following 225-residue polypeptide: Biosynthetic peptidoglycan transglycosylase (225 aa).

Residues 8–28 traverse the membrane as a helical segment; the sequence is VLLIFIGAILLIQLWIFSSLV.

The protein belongs to the glycosyltransferase 51 family.

It is found in the cell inner membrane. The catalysed reaction is [GlcNAc-(1-&gt;4)-Mur2Ac(oyl-L-Ala-gamma-D-Glu-L-Lys-D-Ala-D-Ala)](n)-di-trans,octa-cis-undecaprenyl diphosphate + beta-D-GlcNAc-(1-&gt;4)-Mur2Ac(oyl-L-Ala-gamma-D-Glu-L-Lys-D-Ala-D-Ala)-di-trans,octa-cis-undecaprenyl diphosphate = [GlcNAc-(1-&gt;4)-Mur2Ac(oyl-L-Ala-gamma-D-Glu-L-Lys-D-Ala-D-Ala)](n+1)-di-trans,octa-cis-undecaprenyl diphosphate + di-trans,octa-cis-undecaprenyl diphosphate + H(+). It participates in cell wall biogenesis; peptidoglycan biosynthesis. Peptidoglycan polymerase that catalyzes glycan chain elongation from lipid-linked precursors. This is Biosynthetic peptidoglycan transglycosylase from Acinetobacter baumannii (strain AB307-0294).